We begin with the raw amino-acid sequence, 311 residues long: Class E basic helix-loop-helix protein 22 (311 aa).

The interval 22–170 is disordered; the sequence is AKRMESAFRS…GGSKKSKEQK (149 aa). Residues 81 to 96 show a composition bias toward low complexity; it reads GESASRSSVAESSGGE. Gly residues predominate over residues 125 to 147; sequence AGGGGGGGGGGGGGPGGGGGGGL. One can recognise a bHLH domain in the interval 171–225; the sequence is ALRLNINARERRRMHDLNDALDELRAVIPYAHSPSVRKLSKIATLLLAKNYILMQ.

It is found in the nucleus. May act as a transcriptional repressor. In Gallus gallus (Chicken), this protein is Class E basic helix-loop-helix protein 22 (BHLHE22).